The following is a 233-amino-acid chain: Small ribosomal subunit protein uS5 (233 aa).

Residues Met-1 to Ser-13 are compositionally biased toward polar residues. Positions Met-1 to Asn-40 are disordered. Residues Asn-15–Asn-40 show a composition bias toward basic and acidic residues. Residues Leu-45–Val-108 enclose the S5 DRBM domain.

This sequence belongs to the universal ribosomal protein uS5 family. As to quaternary structure, part of the 30S ribosomal subunit. Contacts proteins S4 and S8.

Functionally, with S4 and S12 plays an important role in translational accuracy. In terms of biological role, located at the back of the 30S subunit body where it stabilizes the conformation of the head with respect to the body. The polypeptide is Small ribosomal subunit protein uS5 (Bifidobacterium longum (strain NCC 2705)).